The sequence spans 156 residues: Small ribosomal subunit protein uS7 (156 aa).

Belongs to the universal ribosomal protein uS7 family. In terms of assembly, part of the 30S ribosomal subunit. Contacts proteins S9 and S11.

Its function is as follows. One of the primary rRNA binding proteins, it binds directly to 16S rRNA where it nucleates assembly of the head domain of the 30S subunit. Is located at the subunit interface close to the decoding center, probably blocks exit of the E-site tRNA. In Mycoplasmopsis pulmonis (strain UAB CTIP) (Mycoplasma pulmonis), this protein is Small ribosomal subunit protein uS7.